A 227-amino-acid polypeptide reads, in one-letter code: Uracil-DNA glycosylase (227 aa).

The active-site Proton acceptor is D68.

It belongs to the uracil-DNA glycosylase (UDG) superfamily. UNG family.

The protein localises to the cytoplasm. It catalyses the reaction Hydrolyzes single-stranded DNA or mismatched double-stranded DNA and polynucleotides, releasing free uracil.. In terms of biological role, excises uracil residues from the DNA which can arise as a result of misincorporation of dUMP residues by DNA polymerase or due to deamination of cytosine. The sequence is that of Uracil-DNA glycosylase from Mycobacterium sp. (strain JLS).